A 159-amino-acid polypeptide reads, in one-letter code: MRCPYCQSEDTQVKDSRPAEDGAAIRRRRVCPDCGGRFTTFERVQLRDLVVVKKSGRKVPFDRDKLLRSVEIAVRKRNVDPERIDRAVTGIVRQLESSGETEVASGEVGRLVMEALKSLDDVAYVRFASVYRNFREAKDFHELLGELKGDEDKSEEDAG.

A zinc finger spans residues 3-34 (CPYCQSEDTQVKDSRPAEDGAAIRRRRVCPDC). Residues 49 to 139 (LVVVKKSGRK…VYRNFREAKD (91 aa)) enclose the ATP-cone domain.

Belongs to the NrdR family. It depends on Zn(2+) as a cofactor.

Its function is as follows. Negatively regulates transcription of bacterial ribonucleotide reductase nrd genes and operons by binding to NrdR-boxes. The polypeptide is Transcriptional repressor NrdR (Mesorhizobium japonicum (strain LMG 29417 / CECT 9101 / MAFF 303099) (Mesorhizobium loti (strain MAFF 303099))).